A 283-amino-acid chain; its full sequence is 4-diphosphocytidyl-2-C-methyl-D-erythritol kinase (283 aa).

Lysine 10 is an active-site residue. 99–109 contributes to the ATP binding site; sequence PMGGGLGGGSS. Aspartate 141 is an active-site residue.

Belongs to the GHMP kinase family. IspE subfamily. In terms of assembly, homodimer.

The catalysed reaction is 4-CDP-2-C-methyl-D-erythritol + ATP = 4-CDP-2-C-methyl-D-erythritol 2-phosphate + ADP + H(+). It participates in isoprenoid biosynthesis; isopentenyl diphosphate biosynthesis via DXP pathway; isopentenyl diphosphate from 1-deoxy-D-xylulose 5-phosphate: step 3/6. In terms of biological role, catalyzes the phosphorylation of the position 2 hydroxy group of 4-diphosphocytidyl-2C-methyl-D-erythritol. The protein is 4-diphosphocytidyl-2-C-methyl-D-erythritol kinase of Escherichia coli (strain 55989 / EAEC).